The following is a 286-amino-acid chain: MDQKMINLATEAGAIEIANDKPFVLFGGMNVLESRDLAMSIAEHYVEVTQKLGIPYVFKASFDKANRSSVNSYRGPGMEEGLKIFEEIKRTFNVPLITDVHEVHQCAPVAEVVDIIQLPAFLARQTDLVVAMAKTGAIINVKKPQFLAPHEMRHIVTKFNEAGNDKIILCERGSSFGYNNLVVDMLGMDDMKKTGYPVIFDATHALQRPGGRADSAGGRRAQATELARSGMALGIAGLFIEAHPDPDNAKCDGPCALPLHQLENYLKQMKAVDDLVKSFAPIDTSK.

This sequence belongs to the KdsA family.

It is found in the cytoplasm. The catalysed reaction is D-arabinose 5-phosphate + phosphoenolpyruvate + H2O = 3-deoxy-alpha-D-manno-2-octulosonate-8-phosphate + phosphate. It participates in carbohydrate biosynthesis; 3-deoxy-D-manno-octulosonate biosynthesis; 3-deoxy-D-manno-octulosonate from D-ribulose 5-phosphate: step 2/3. The protein operates within bacterial outer membrane biogenesis; lipopolysaccharide biosynthesis. This is 2-dehydro-3-deoxyphosphooctonate aldolase from Shewanella denitrificans (strain OS217 / ATCC BAA-1090 / DSM 15013).